A 269-amino-acid chain; its full sequence is Formamidopyrimidine-DNA glycosylase (269 aa).

Proline 2 (schiff-base intermediate with DNA) is an active-site residue. The active-site Proton donor is the glutamate 3. Lysine 57 (proton donor; for beta-elimination activity) is an active-site residue. Residues histidine 90, arginine 109, and arginine 150 each coordinate DNA. The FPG-type zinc finger occupies 235–269; the sequence is QVYGRKGEPCRVCGTPVVATKHAQRATFYCRHCQK. Residue arginine 259 is the Proton donor; for delta-elimination activity of the active site.

Belongs to the FPG family. Monomer. Zn(2+) serves as cofactor.

It carries out the reaction Hydrolysis of DNA containing ring-opened 7-methylguanine residues, releasing 2,6-diamino-4-hydroxy-5-(N-methyl)formamidopyrimidine.. It catalyses the reaction 2'-deoxyribonucleotide-(2'-deoxyribose 5'-phosphate)-2'-deoxyribonucleotide-DNA = a 3'-end 2'-deoxyribonucleotide-(2,3-dehydro-2,3-deoxyribose 5'-phosphate)-DNA + a 5'-end 5'-phospho-2'-deoxyribonucleoside-DNA + H(+). Functionally, involved in base excision repair of DNA damaged by oxidation or by mutagenic agents. Acts as a DNA glycosylase that recognizes and removes damaged bases. Has a preference for oxidized purines, such as 7,8-dihydro-8-oxoguanine (8-oxoG). Has AP (apurinic/apyrimidinic) lyase activity and introduces nicks in the DNA strand. Cleaves the DNA backbone by beta-delta elimination to generate a single-strand break at the site of the removed base with both 3'- and 5'-phosphates. This chain is Formamidopyrimidine-DNA glycosylase, found in Salmonella arizonae (strain ATCC BAA-731 / CDC346-86 / RSK2980).